The primary structure comprises 227 residues: Ribosomal RNA small subunit methyltransferase G (227 aa).

Residues Gly74, Leu79, Ala124–Glu125, and Arg142 contribute to the S-adenosyl-L-methionine site.

Belongs to the methyltransferase superfamily. RNA methyltransferase RsmG family.

The protein localises to the cytoplasm. Its function is as follows. Specifically methylates the N7 position of guanine in position 518 of 16S rRNA. The chain is Ribosomal RNA small subunit methyltransferase G from Mycolicibacterium vanbaalenii (strain DSM 7251 / JCM 13017 / BCRC 16820 / KCTC 9966 / NRRL B-24157 / PYR-1) (Mycobacterium vanbaalenii).